The following is a 492-amino-acid chain: N-succinylglutamate 5-semialdehyde dehydrogenase (492 aa).

An NAD(+)-binding site is contributed by 220–225; the sequence is GSASTG. Catalysis depends on residues Glu-243 and Cys-277.

This sequence belongs to the aldehyde dehydrogenase family. AstD subfamily.

It carries out the reaction N-succinyl-L-glutamate 5-semialdehyde + NAD(+) + H2O = N-succinyl-L-glutamate + NADH + 2 H(+). Its pathway is amino-acid degradation; L-arginine degradation via AST pathway; L-glutamate and succinate from L-arginine: step 4/5. Catalyzes the NAD-dependent reduction of succinylglutamate semialdehyde into succinylglutamate. In Salmonella enteritidis PT4 (strain P125109), this protein is N-succinylglutamate 5-semialdehyde dehydrogenase.